A 131-amino-acid polypeptide reads, in one-letter code: uncharacterized protein (131 aa).

Helical transmembrane passes span 61–81 (LLLL…YLPI) and 102–122 (VCSI…ALRY).

The protein localises to the membrane. This is an uncharacterized protein from Saccharomyces cerevisiae (strain ATCC 204508 / S288c) (Baker's yeast).